The following is a 338-amino-acid chain: Nucleoid-associated protein HI_0839 (338 aa).

The protein belongs to the YejK family.

The protein localises to the cytoplasm. Its subcellular location is the nucleoid. This chain is Nucleoid-associated protein HI_0839, found in Haemophilus influenzae (strain ATCC 51907 / DSM 11121 / KW20 / Rd).